Consider the following 5488-residue polypeptide: Polyketide synthase PksN (5488 aa).

A condensation region spans residues 3 to 301 (RQLKSPLSEG…NMMAVRSKNI (299 aa)). One copy of the WD 1 repeat lies at 165–205 (QQPSTADYYDFVDWENRMLTGREGEEHLAYWKEQLSGSLPV). The tract at residues 493 to 903 (TYKEVDEKST…EFPGILDQAV (411 aa)) is adenylation. Residues 965 to 1006 (RKELEKREIVFNRRKPNHLQLTEIEDQVLRIWEETLKVSGFG) form a WD 2 repeat. The 76-residue stretch at 983–1058 (LQLTEIEDQV…AISEYILEMK (76 aa)) folds into the Carrier 1 domain. Ser1018 is subject to O-(pantetheine 4'-phosphoryl)serine. The 427-residue stretch at 1089 to 1515 (DDSVAIVGIS…GTNAHAIFEQ (427 aa)) folds into the Ketosynthase family 3 (KS3) 1 domain. Residues Cys1261, His1397, and His1437 each act as for beta-ketoacyl synthase 1 activity in the active site. The segment at 1700–1826 (HPLVHHNTSV…GKAELIQLKR (127 aa)) is N-terminal hotdog fold 1. The 293-residue stretch at 1700 to 1992 (HPLVHHNTSV…TRVMEADIQT (293 aa)) folds into the PKS/mFAS DH 1 domain. His1729 acts as the Proton acceptor; for dehydratase activity 1 in catalysis. The C-terminal hotdog fold 1 stretch occupies residues 1840-1992 (DQSKMDAASF…TRVMEADIQT (153 aa)). Catalysis depends on Asp1900, which acts as the Proton donor; for dehydratase activity 1. The WD 3 repeat unit spans residues 2165 to 2204 (KQAKGDGSKPWKDNGVYLISGGAGGLGHIFAKEIAEQTKN). In terms of domain architecture, Carrier 2 spans 2448-2525 (SLLDKVKAML…AFGKHLSEEY (78 aa)). Ser2485 carries the O-(pantetheine 4'-phosphoryl)serine modification. One can recognise a Ketosynthase family 3 (KS3) 2 domain in the interval 2576-3012 (PEPIAIVGIS…GVNAHVIIEE (437 aa)). Catalysis depends on for beta-ketoacyl synthase 2 activity residues Cys2747, His2882, and His2928. Residues 3038–3109 (KNEARLKEHA…AAEKSGVEDV (72 aa)) are a coiled coil. Residues 3207–3332 (HPLMHQNTSN…GSAVLNPAEN (126 aa)) form an N-terminal hotdog fold 2 region. A PKS/mFAS DH 2 domain is found at 3207 to 3492 (HPLMHQNTSN…FRAAEGGSGS (286 aa)). The active-site Proton acceptor; for dehydratase activity 2 is the His3236. The interval 3346-3492 (QESHFSVNEV…FRAAEGGSGS (147 aa)) is C-terminal hotdog fold 2. The active-site Proton donor; for dehydratase activity 2 is Asp3408. A coiled-coil region spans residues 3626 to 3655 (DSHENVESVIEKLKENKRHTEDQHIKYEKG). Residues 3666 to 3705 (QIDDREISMPWRDKGVYLITGGAGGLGFIFAKEIARQAEQ) form a WD 4 repeat. Residues 3952-4026 (DHIQEVLKQT…AFAGYLSEEY (75 aa)) form the Carrier 3 domain. Ser3986 carries the post-translational modification O-(pantetheine 4'-phosphoryl)serine. The Ketosynthase family 3 (KS3) 3 domain maps to 4076 to 4511 (PEPIAIVGMS…GVNAHVVIEE (436 aa)). Catalysis depends on for beta-ketoacyl synthase 3 activity residues Cys4245, His4380, and His4427. Residues 4706 to 4830 (HPLIHVNTSD…GSASIRGAGD (125 aa)) are N-terminal hotdog fold 3. The 283-residue stretch at 4706–4988 (HPLIHVNTSD…SRLLEEGIQP (283 aa)) folds into the PKS/mFAS DH 3 domain. His4735 (proton acceptor; for dehydratase activity 3) is an active-site residue. Positions 4844–4988 (SLSTLSHDQC…SRLLEEGIQP (145 aa)) are C-terminal hotdog fold 3. The Proton donor; for dehydratase activity 3 role is filled by Asp4906. A WD 5 repeat occupies 5206 to 5244 (HNNQPVHTKYKHGGVYVVIGGAGGIGEAWSEYMIRTYQA). Positions 5275 to 5303 (IQADAANREELERAYETMKQTHREINGII) form a coiled coil.

The protein belongs to the ATP-dependent AMP-binding enzyme family. It depends on pantetheine 4'-phosphate as a cofactor.

It is found in the cytoplasm. The protein operates within antibiotic biosynthesis; bacillaene biosynthesis. In terms of biological role, involved in some intermediate steps for the synthesis of the antibiotic polyketide bacillaene which is involved in secondary metabolism. The sequence is that of Polyketide synthase PksN (pksN) from Bacillus subtilis (strain 168).